The primary structure comprises 355 residues: Peptide chain release factor 1 (355 aa).

N5-methylglutamine is present on Gln-233.

Belongs to the prokaryotic/mitochondrial release factor family. Post-translationally, methylated by PrmC. Methylation increases the termination efficiency of RF1.

The protein resides in the cytoplasm. In terms of biological role, peptide chain release factor 1 directs the termination of translation in response to the peptide chain termination codons UAG and UAA. This Bacillus cytotoxicus (strain DSM 22905 / CIP 110041 / 391-98 / NVH 391-98) protein is Peptide chain release factor 1.